The primary structure comprises 323 residues: V-type ATP synthase subunit C (323 aa).

The protein belongs to the V-ATPase V0D/AC39 subunit family.

In terms of biological role, produces ATP from ADP in the presence of a proton gradient across the membrane. In Thermus thermophilus (strain ATCC BAA-163 / DSM 7039 / HB27), this protein is V-type ATP synthase subunit C.